The sequence spans 158 residues: Large ribosomal subunit protein bL19 (158 aa).

Residues M1–S35 form a disordered region. The segment covering E16 to S35 has biased composition (polar residues).

Belongs to the bacterial ribosomal protein bL19 family.

Functionally, this protein is located at the 30S-50S ribosomal subunit interface and may play a role in the structure and function of the aminoacyl-tRNA binding site. In Prochlorococcus marinus (strain MIT 9313), this protein is Large ribosomal subunit protein bL19.